The sequence spans 160 residues: Non-secretory ribonuclease (160 aa).

The N-terminal stretch at 1-27 (MVPKLFTSPICLLLLLGLMGVEGSLHA) is a signal peptide. A C-linked (Man) tryptophan glycan is attached at Trp34. Residue His42 is the Proton acceptor of the active site. A glycan (N-linked (GlcNAc...) asparagine) is linked at Asn44. Disulfide bonds link Cys50–Cys110, Cys64–Cys122, Cys82–Cys137, and Cys89–Cys98. Position 60 is a 3'-nitrotyrosine (Tyr60). 65 to 69 (KNQNT) lines the substrate pocket. N-linked (GlcNAc...) asparagine glycans are attached at residues Asn92, Asn111, and Asn138. His155 functions as the Proton donor in the catalytic mechanism.

This sequence belongs to the pancreatic ribonuclease family. As to quaternary structure, interacts with and forms a tight 1:1 complex with RNH1. Dimerization of two such complexes may occur.

The protein localises to the lysosome. Its subcellular location is the cytoplasmic granule. The enzyme catalyses an [RNA] containing cytidine + H2O = an [RNA]-3'-cytidine-3'-phosphate + a 5'-hydroxy-ribonucleotide-3'-[RNA].. It carries out the reaction an [RNA] containing uridine + H2O = an [RNA]-3'-uridine-3'-phosphate + a 5'-hydroxy-ribonucleotide-3'-[RNA].. Its function is as follows. This is a non-secretory ribonuclease. It is a pyrimidine specific nuclease with a slight preference for U. Cytotoxin and helminthotoxin. Possesses a wide variety of biological activities. The polypeptide is Non-secretory ribonuclease (RNASE2) (Papio hamadryas (Hamadryas baboon)).